The following is a 176-amino-acid chain: Siroheme decarboxylase alpha subunit (176 aa).

Residues 1–24 (MTEAHNACCHPSGTAAGHHGAGKA) are disordered. The span at 12–24 (SGTAAGHHGAGKA) shows a compositional bias: low complexity.

It belongs to the Ahb/Nir family. Forms a heterodimer composed of AhbA and AhbB. Also forms heterotetramers.

It carries out the reaction siroheme + 2 H(+) = 12,18-didecarboxysiroheme + 2 CO2. The protein operates within porphyrin-containing compound metabolism; protoheme biosynthesis. Functionally, involved in siroheme-dependent heme b biosynthesis. Catalyzes the decarboxylation of siroheme into didecarboxysiroheme. The sequence is that of Siroheme decarboxylase alpha subunit from Nitratidesulfovibrio vulgaris (strain ATCC 29579 / DSM 644 / CCUG 34227 / NCIMB 8303 / VKM B-1760 / Hildenborough) (Desulfovibrio vulgaris).